The chain runs to 990 residues: DNA ligase 4 (990 aa).

Positions 57–84 (TQKKGRQPPGPRRKAGPHGHSNLSPHEA) are disordered. Positions 324, 326, 327, 331, 394, 436, 496, 501, 518, and 520 each coordinate ATP. The active-site N6-AMP-lysine intermediate is the K326. A Mg(2+)-binding site is contributed by E394. E496 contacts Mg(2+). BRCT domains lie at 728 to 821 (PQSK…LPYL) and 900 to 989 (YMFS…RYQW).

This sequence belongs to the ATP-dependent DNA ligase family. Mg(2+) serves as cofactor.

It localises to the nucleus. The enzyme catalyses ATP + (deoxyribonucleotide)n-3'-hydroxyl + 5'-phospho-(deoxyribonucleotide)m = (deoxyribonucleotide)n+m + AMP + diphosphate.. DNA ligase involved in DNA non-homologous end joining (NHEJ); required for double-strand break (DSB) repair. The sequence is that of DNA ligase 4 (LIG4) from Phaeosphaeria nodorum (strain SN15 / ATCC MYA-4574 / FGSC 10173) (Glume blotch fungus).